A 284-amino-acid polypeptide reads, in one-letter code: Four and a half LIM domains protein 5 (284 aa).

A C4-type zinc finger spans residues 8–32 (CQYCTSSLIGKKYVLKDDNLYCISC). LIM zinc-binding domains lie at 39–100 (NYCE…ECSS), 101–160 (KCFH…KEFA), and 161–220 (HYCN…LYAK).

In terms of assembly, interacts with CREM (via the third LIM domain). Interacts (via second LIM domain) with SPAG8. In terms of tissue distribution, testis-specific, temporal expression is coordinated with CREM.

The protein localises to the nucleus. In terms of biological role, may be involved in the regulation of spermatogenesis. Stimulates CREM transcriptional activity in a phosphorylation-independent manner. The polypeptide is Four and a half LIM domains protein 5 (Fhl5) (Mus musculus (Mouse)).